Consider the following 287-residue polypeptide: Probable endonuclease 4 (287 aa).

9 residues coordinate Zn(2+): H69, H109, E144, D178, H181, H215, D228, H230, and E260.

It belongs to the AP endonuclease 2 family. Zn(2+) is required as a cofactor.

The enzyme catalyses Endonucleolytic cleavage to 5'-phosphooligonucleotide end-products.. Its function is as follows. Endonuclease IV plays a role in DNA repair. It cleaves phosphodiester bonds at apurinic or apyrimidinic (AP) sites, generating a 3'-hydroxyl group and a 5'-terminal sugar phosphate. This is Probable endonuclease 4 from Thermotoga sp. (strain RQ2).